A 171-amino-acid polypeptide reads, in one-letter code: Xanthine-guanine phosphoribosyltransferase (171 aa).

Residues arginine 51–glycine 52 and aspartate 106–threonine 114 contribute to the 5-phospho-alpha-D-ribose 1-diphosphate site. Aspartate 107 lines the Mg(2+) pocket. Residues aspartate 110 and isoleucine 153 each coordinate guanine. 2 residues coordinate xanthine: aspartate 110 and isoleucine 153. GMP contacts are provided by residues aspartate 110–threonine 114 and tryptophan 152–isoleucine 153.

This sequence belongs to the purine/pyrimidine phosphoribosyltransferase family. XGPT subfamily. In terms of assembly, homotetramer. Mg(2+) serves as cofactor.

It localises to the cell inner membrane. It catalyses the reaction GMP + diphosphate = guanine + 5-phospho-alpha-D-ribose 1-diphosphate. The catalysed reaction is XMP + diphosphate = xanthine + 5-phospho-alpha-D-ribose 1-diphosphate. The enzyme catalyses IMP + diphosphate = hypoxanthine + 5-phospho-alpha-D-ribose 1-diphosphate. It participates in purine metabolism; GMP biosynthesis via salvage pathway; GMP from guanine: step 1/1. Its pathway is purine metabolism; XMP biosynthesis via salvage pathway; XMP from xanthine: step 1/1. Functionally, purine salvage pathway enzyme that catalyzes the transfer of the ribosyl-5-phosphate group from 5-phospho-alpha-D-ribose 1-diphosphate (PRPP) to the N9 position of the 6-oxopurines guanine and xanthine to form the corresponding ribonucleotides GMP (guanosine 5'-monophosphate) and XMP (xanthosine 5'-monophosphate), with the release of PPi. To a lesser extent, also acts on hypoxanthine. The sequence is that of Xanthine-guanine phosphoribosyltransferase from Ruegeria pomeroyi (strain ATCC 700808 / DSM 15171 / DSS-3) (Silicibacter pomeroyi).